The chain runs to 594 residues: Insulin-like growth factor 2 mRNA-binding protein 3-A (594 aa).

RRM domains are found at residues 2–75 and 81–156; these read NKLY…HSVP and RKLQ…YIPD. Residues 161 to 177 show a composition bias toward low complexity; it reads PQAPSQQLQQQPQQQHP. Residues 161 to 206 form a disordered region; the sequence is PQAPSQQLQQQPQQQHPQGRRGFGQRGPARQGSPGAAARPKPQTEV. 2 consecutive KH domains span residues 205–270 and 286–353; these read EVPL…CKII and EIPL…EEEI. Residues 392 to 415 form a disordered region; sequence GMPPPSVGVPSPTSSTSYPPFGQQ. The span at 399–411 shows a compositional bias: low complexity; the sequence is GVPSPTSSTSYPP. KH domains lie at 418-483 and 500-566; these read SETV…QGRI and KLET…QRKI.

The protein belongs to the RRM IMP/VICKZ family. Homodimer and multimer. Associates with microtubules. Interaction with a translocation machinery protein TRAPA of the endoplasmic reticulum. Component of a mRNP complex, at least composed of DAZAP1, IGF2BP3, STAU and VgRBP60. The mRNP complex with DAZAP1, IGF2BP3, STAU and VgRBP60 is only found in the cytoplasm. Interacts with a hnRNP 1 related RNA transport protein VgRBP60 both in the nucleus (in a RNA-independent manner) and the cytoplasm (in a RNA-dependent manner). Found in a B3 activator complex.

It localises to the nucleus. The protein localises to the cytoplasm. The protein resides in the endoplasmic reticulum. Its function is as follows. RNA-binding protein that acts as a regulator of mRNA transport and localization. Binds to the RNA sequence motif 5'-UUCAC-3'. Preferentially binds to N6-methyladenosine (m6A)-containing mRNAs and increases their stability. Mediates the specific association of Vg1 RNA to microtubules. Binds specifically to the vegetal localization elements (VLE or VgLE) in the 3'-UTR of Vg1 and VegT mRNAs. Binds to the Vg1 and VegT mRNAs in both the nucleus and the cytoplasm. May regulate mRNA translation. Acts as a transcription regulator. Binds to the 5'-[TA]GGTTACT-3' motif within element 3 of the TFIIIA gene promoter. This Xenopus laevis (African clawed frog) protein is Insulin-like growth factor 2 mRNA-binding protein 3-A (igf2bp3-a).